The chain runs to 474 residues: Cysteine protease ATG4A (474 aa).

The tract at residues 1–32 (MTSLPGRGVSPSSSDPLCEGNAAPSSSSSSGQ) is disordered. Catalysis depends on Cys-161, which acts as the Nucleophile. Active-site residues include Asp-358 and His-360. The segment covering 439–449 (KQMYNEESSSG) has biased composition (polar residues). The interval 439-474 (KQMYNEESSSGDGMDSINVEGLDGSGETGEEEWQIL) is disordered.

The protein belongs to the peptidase C54 family. Interacts with ATG8.

It localises to the cytoplasm. It catalyses the reaction [protein]-C-terminal L-amino acid-glycyl-phosphatidylethanolamide + H2O = [protein]-C-terminal L-amino acid-glycine + a 1,2-diacyl-sn-glycero-3-phosphoethanolamine. Cysteine protease that plays a key role in autophagy by mediating both proteolytic activation and delipidation of ATG8 family proteins. The protease activity is required for proteolytic activation of ATG8 family proteins: cleaves the C-terminal amino acid of ATG8 proteins to reveal a C-terminal glycine. Exposure of the glycine at the C-terminus is essential for ATG8 proteins conjugation to phosphatidylethanolamine (PE) and insertion to membranes, which is necessary for autophagy. In addition to the protease activity, also mediates delipidation of PE-conjugated ATG8 proteins. The sequence is that of Cysteine protease ATG4A (ATG4A) from Oryza sativa subsp. japonica (Rice).